Consider the following 265-residue polypeptide: Mlc titration factor A (265 aa).

The Zn(2+) site is built by H111, H148, H152, and E211.

It belongs to the MtfA family. As to quaternary structure, interacts with Mlc. Requires Zn(2+) as cofactor.

The protein resides in the cytoplasm. In terms of biological role, involved in the modulation of the activity of the glucose-phosphotransferase system (glucose-PTS). Interacts with the transcriptional repressor Mlc, preventing its interaction with DNA and leading to the modulation of expression of genes regulated by Mlc, including ptsG, which encodes the PTS system glucose-specific EIICB component. Its function is as follows. Shows zinc-dependent metallopeptidase activity. The sequence is that of Mlc titration factor A from Escherichia coli (strain UTI89 / UPEC).